Reading from the N-terminus, the 153-residue chain is Insulin-like growth factor 1 (153 aa).

A b region spans residues 49–77 (GPETLCGAELVDALQFVCGDRGFYFNKPT). 3 disulfides stabilise this stretch: Cys54-Cys96, Cys66-Cys109, and Cys95-Cys100. The c stretch occupies residues 78–89 (GYGSSSRRAPQT). Residues 90 to 110 (GIVDECCFRSCDLRRLEMYCA) form an a region. The tract at residues 111-118 (PLKPAKSA) is d. The propeptide at 119 to 153 (RSVRAQRHTDMPKAQKEVHLKNASRGSAGNKNYRM) is e peptide. The interval 120–153 (SVRAQRHTDMPKAQKEVHLKNASRGSAGNKNYRM) is disordered. Positions 125-138 (RHTDMPKAQKEVHL) are enriched in basic and acidic residues. Over residues 142-153 (SRGSAGNKNYRM) the composition is skewed to polar residues.

Belongs to the insulin family. In terms of assembly, forms a ternary complex with IGFR1 and ITGAV:ITGB3. Forms a ternary complex with IGFR1 and ITGA6:ITGB4. Forms a ternary complex with IGFBP3 and ALS.

The protein resides in the secreted. Its function is as follows. The insulin-like growth factors, isolated from plasma, are structurally and functionally related to insulin but have a much higher growth-promoting activity. May be a physiological regulator of [1-14C]-2-deoxy-D-glucose (2DG) transport and glycogen synthesis in osteoblasts. Stimulates glucose transport in bone-derived osteoblastic (PyMS) cells and is effective at much lower concentrations than insulin, not only regarding glycogen and DNA synthesis but also with regard to enhancing glucose uptake. May play a role in synapse maturation. Ca(2+)-dependent exocytosis of IGF1 is required for sensory perception of smell in the olfactory bulb. Acts as a ligand for IGF1R. Binds to the alpha subunit of IGF1R, leading to the activation of the intrinsic tyrosine kinase activity which autophosphorylates tyrosine residues in the beta subunit thus initiating a cascade of down-stream signaling events leading to activation of the PI3K-AKT/PKB and the Ras-MAPK pathways. Binds to integrins ITGAV:ITGB3 and ITGA6:ITGB4. Its binding to integrins and subsequent ternary complex formation with integrins and IGFR1 are essential for IGF1 signaling. Induces the phosphorylation and activation of IGFR1, MAPK3/ERK1, MAPK1/ERK2 and AKT1. As part of the MAPK/ERK signaling pathway, acts as a negative regulator of apoptosis in cardiomyocytes via promotion of STUB1/CHIP-mediated ubiquitination and degradation of ICER-type isoforms of CREM. The sequence is that of Insulin-like growth factor 1 from Ailuropoda melanoleuca (Giant panda).